We begin with the raw amino-acid sequence, 207 residues long: Ras-related protein Rab-7a (207 aa).

Threonine 2 carries the post-translational modification N-acetylthreonine. GTP is bound by residues serine 17, glycine 18, valine 19, glycine 20, lysine 21, threonine 22, serine 23, serine 34, asparagine 35, tyrosine 37, and threonine 40. Threonine 22 provides a ligand contact to Mg(2+). Residues 28–41 carry the Switch 1 motif; sequence YVNKKFSNQYKATI. 2 residues coordinate Mg(2+): threonine 40 and aspartate 63. Glycine 66 contributes to the GTP binding site. Residues 67 to 82 carry the Switch 2 motif; the sequence is QERFQSLGVAFYRGAD. Serine 72 carries the phosphoserine modification. GTP is bound by residues asparagine 125, lysine 126, aspartate 128, alanine 156, and lysine 157. Residues lysine 191 and lysine 194 each participate in a glycyl lysine isopeptide (Lys-Gly) (interchain with G-Cter in ubiquitin) cross-link. Residues cysteine 205 and cysteine 207 are each lipidated (S-geranylgeranyl cysteine). Cysteine methyl ester is present on cysteine 207.

It belongs to the small GTPase superfamily. Rab family. Interacts with NTRK1/TRKA. Interacts with RILP. Interacts with PSMA7. Interacts with RNF115. Interacts with FYCO1. Interacts with the PIK3C3/VPS34-PIK3R4 complex. The GTP-bound form interacts with OSBPL1A. The GTP-bound form interacts with RAC1. Interacts with CLN3. Interacts with CHM, the substrate-binding subunit of the Rab geranylgeranyltransferase complex. Interacts with C9orf72. Does not interact with HPS4 and the BLOC-3 complex (heterodimer of HPS1 and HPS4). Interacts with CLN5. Interacts with PLEKHM1 (via N- and C-terminus). Interacts with PRPH; the interaction is direct. Interacts with VPS13A. The GDP-bound form interacts with RIMOC1. Interacts with the MON1A-CCZ1B complex and this interaction is enhanced in the presence of RIMOC1. Interacts with VPS39 and VPS41. Forms a ternary complex with LAMP2 and RUFY4; the interaction with LAMP2 is mediated by RUFY4 (via RUN and coiled coil domains). Requires Mg(2+) as cofactor. Post-translationally, deubiquitination at Lys-191 and Lys-194 by USP32. In terms of processing, phosphorylated at Ser-72 by LRRK1; phosphorylation is dependent on protein kinase C (PKC) activation of LRRK1. Prenylated. Prenylation is required for association with cellular membranes.

It is found in the cytoplasmic vesicle. The protein localises to the phagosome membrane. It localises to the late endosome membrane. Its subcellular location is the lysosome membrane. The protein resides in the melanosome membrane. It is found in the autophagosome membrane. The protein localises to the lipid droplet. It localises to the endosome membrane. Its subcellular location is the mitochondrion membrane. It carries out the reaction GTP + H2O = GDP + phosphate + H(+). Regulated by guanine nucleotide exchange factors (GEFs) which promote the exchange of bound GDP for free GTP. Regulated by GTPase activating proteins (GAPs) which increase the GTP hydrolysis activity. Inhibited by GDP dissociation inhibitors (GDIs). In terms of biological role, the small GTPases Rab are key regulators of intracellular membrane trafficking, from the formation of transport vesicles to their fusion with membranes. Rabs cycle between an inactive GDP-bound form and an active GTP-bound form that is able to recruit to membranes different sets of downstream effectors directly responsible for vesicle formation, movement, tethering and fusion. In its active state, RAB7A binds to a variety of effector proteins playing a key role in the regulation of endo-lysosomal trafficking. Governs early-to-late endosomal maturation, microtubule minus-end as well as plus-end directed endosomal migration and positioning, and endosome-lysosome transport through different protein-protein interaction cascades. Also plays a central role in growth-factor-mediated cell signaling, nutrient-transporter-mediated nutrient uptake, neurotrophin transport in the axons of neurons and lipid metabolism. Also involved in regulation of some specialized endosomal membrane trafficking, such as maturation of melanosomes, pathogen-induced phagosomes (or vacuoles) and autophagosomes. Plays a role in the maturation and acidification of phagosomes that engulf pathogens, such as S.aureus and Mycobacteria. Plays a role in the fusion of phagosomes with lysosomes. In concert with RAC1, plays a role in regulating the formation of RBs (ruffled borders) in osteoclasts. Controls the endosomal trafficking and neurite outgrowth signaling of NTRK1/TRKA. Regulates the endocytic trafficking of the EGF-EGFR complex by regulating its lysosomal degradation. Involved in the ADRB2-stimulated lipolysis through lipophagy, a cytosolic lipase-independent autophagic pathway. Required for the exosomal release of SDCBP, CD63 and syndecan. Required for vesicular trafficking and cell surface expression of ACE2. May play a role in PRPH neuronal intermediate filament assembly. The polypeptide is Ras-related protein Rab-7a (RAB7A) (Canis lupus familiaris (Dog)).